The chain runs to 577 residues: Arginine--tRNA ligase (577 aa).

Positions 122–132 (PNVAKEMHVGH) match the 'HIGH' region motif.

This sequence belongs to the class-I aminoacyl-tRNA synthetase family. As to quaternary structure, monomer.

It is found in the cytoplasm. It catalyses the reaction tRNA(Arg) + L-arginine + ATP = L-arginyl-tRNA(Arg) + AMP + diphosphate. In Escherichia coli O6:K15:H31 (strain 536 / UPEC), this protein is Arginine--tRNA ligase.